Here is a 604-residue protein sequence, read N- to C-terminus: MCGIVGYVGFRNATDVLLDGLRRLEYRGYDSAGIAVRTPEGLKVVKRSGKLSALAQAVGKTPLQGALGIGHTRWATHGAPTDPNAHPHTTEDGRIALIHNGIFENYLELKEALEARGHRFRSETDTEVLAHLLEETYRGDLLEALREALKAVRGAYAVVVAHEDHEEIVAARTVSPLVVGLGEGENFLASDVPALLPYTRRVIFLHDGDVVRLTREGVEITDLEGRPVQREAVEVDWTLEAAEKGGFPHYMLKEIYEQPWVLENTLGGRLREEEGTVELGLALDPREVDRVHVIACGTASYAGLYGKYLLETLARLPTEWDVASEYRYRDPVVDSRTLALAISQSGETIDTLEGLREAKRKGARSLGVINAKGSTLTREVEDVLYIHAGPEIGVASTKAYTAMLVAMALLAVWFGRARGALALEEAQSLLREMRRLPRLVEEVLEKRPLVAHVAEKYHQARDFLFLGRHVQAPTAYEGALKLKEISYIHAEAYPAGEMKHGPIALIDEHLPVVVLATKGPLYEKTLSNIQEVRARGGKVIAIATEGDEEIPRLAQDVIYVPEVHPLLAPIVSVVPLQLLAYEIAVLLGRDVDQPRNLAKSVTVE.

Catalysis depends on Cys2, which acts as the Nucleophile; for GATase activity. One can recognise a Glutamine amidotransferase type-2 domain in the interval 2–216 (CGIVGYVGFR…DGDVVRLTRE (215 aa)). SIS domains lie at 281-420 (LALD…ARGA) and 453-594 (VAEK…VDQP). Lys599 acts as the For Fru-6P isomerization activity in catalysis.

As to quaternary structure, homodimer.

It is found in the cytoplasm. The enzyme catalyses D-fructose 6-phosphate + L-glutamine = D-glucosamine 6-phosphate + L-glutamate. Functionally, catalyzes the first step in hexosamine metabolism, converting fructose-6P into glucosamine-6P using glutamine as a nitrogen source. This Thermus thermophilus (strain ATCC BAA-163 / DSM 7039 / HB27) protein is Glutamine--fructose-6-phosphate aminotransferase [isomerizing].